Here is a 665-residue protein sequence, read N- to C-terminus: Transketolase (665 aa).

His26 lines the substrate pocket. Residues His66 and Gly114 to Leu116 contribute to the thiamine diphosphate site. The disordered stretch occupies residues Asn94–Gly114. Residues Thr97–Gly114 are compositionally biased toward low complexity. Position 155 (Asp155) interacts with Mg(2+). Gly156 and Asn185 together coordinate thiamine diphosphate. Mg(2+)-binding residues include Asn185 and Ile187. Substrate contacts are provided by His261, Arg358, and Ser385. His261 serves as a coordination point for thiamine diphosphate. Glu411 serves as the catalytic Proton donor. Thiamine diphosphate is bound at residue Phe437. Substrate contacts are provided by His461, Asp469, and Arg520.

It belongs to the transketolase family. In terms of assembly, homodimer. Mg(2+) serves as cofactor. The cofactor is Ca(2+). Requires Mn(2+) as cofactor. It depends on Co(2+) as a cofactor. Thiamine diphosphate is required as a cofactor.

It carries out the reaction D-sedoheptulose 7-phosphate + D-glyceraldehyde 3-phosphate = aldehydo-D-ribose 5-phosphate + D-xylulose 5-phosphate. Catalyzes the transfer of a two-carbon ketol group from a ketose donor to an aldose acceptor, via a covalent intermediate with the cofactor thiamine pyrophosphate. This is Transketolase (tkt) from Buchnera aphidicola subsp. Acyrthosiphon pisum (strain APS) (Acyrthosiphon pisum symbiotic bacterium).